The chain runs to 121 residues: Large ribosomal subunit protein uL18 (121 aa).

This sequence belongs to the universal ribosomal protein uL18 family. Part of the 50S ribosomal subunit; part of the 5S rRNA/L5/L18/L25 subcomplex. Contacts the 5S and 23S rRNAs.

Functionally, this is one of the proteins that bind and probably mediate the attachment of the 5S RNA into the large ribosomal subunit, where it forms part of the central protuberance. This chain is Large ribosomal subunit protein uL18, found in Polaromonas sp. (strain JS666 / ATCC BAA-500).